The following is a 192-amino-acid chain: MADNYTPRMKKLYDDKIVKAMTDKFGYKNAMEVPKIEKITLNMGVGEATQDKKKVEAAAAEMELIAGQKPVVTKAKKSIAQFKLREGMPIGCKVTLRRERMYEFLDRLITIAMPRIRDFRGVSAKSFDGRGNYAMGLKEQIIFPEINYDRIDQVRGMDVIVTTTARTDEEARELLRLFGFPFPIEAQEKEAA.

Belongs to the universal ribosomal protein uL5 family. As to quaternary structure, part of the 50S ribosomal subunit; part of the 5S rRNA/L5/L18/L25 subcomplex. Contacts the 5S rRNA and the P site tRNA. Forms a bridge to the 30S subunit in the 70S ribosome.

This is one of the proteins that bind and probably mediate the attachment of the 5S RNA into the large ribosomal subunit, where it forms part of the central protuberance. In the 70S ribosome it contacts protein S13 of the 30S subunit (bridge B1b), connecting the 2 subunits; this bridge is implicated in subunit movement. Contacts the P site tRNA; the 5S rRNA and some of its associated proteins might help stabilize positioning of ribosome-bound tRNAs. The protein is Large ribosomal subunit protein uL5 of Sphingopyxis alaskensis (strain DSM 13593 / LMG 18877 / RB2256) (Sphingomonas alaskensis).